Consider the following 494-residue polypeptide: GPI alpha-1,6-mannosyltransferase 2 (494 aa).

The Cytoplasmic segment spans residues 1–13; sequence MWSLDPSQKEVLR. Residues 14–34 traverse the membrane as a helical segment; that stretch reads FAVSCRILTLMLQALFNIIIP. The Lumenal segment spans residues 35-77; that stretch reads DHHADAFSPPRLASSCSVDQLVEGLLGGLSRWDAEHFLFIAEH. Residues 78–98 form a helical membrane-spanning segment; that stretch reads GYLYEHNFAFFPGFPLALLMG. Topologically, residues 99–113 are cytoplasmic; the sequence is TELLRPLQGLLSQRS. The chain crosses the membrane as a helical span at residues 114 to 134; the sequence is CLLVSVALLNFLFSVLAAVTL. Over 135 to 136 the chain is Lumenal; it reads HD. Residues 137–157 traverse the membrane as a helical segment; that stretch reads LGCLVLGCPRQAFYAAMLFCL. The Cytoplasmic segment spans residues 158–161; that stretch reads SPAN. The helical transmembrane segment at 162–182 threads the bilayer; sequence VFLAAGYSEALFAFLTFSAMG. The Lumenal portion of the chain corresponds to 183–192; sequence QLERGRSWAS. The helical transmembrane segment at 193–213 threads the bilayer; sequence GLLFALATGVRSNGLVSVGFL. The Cytoplasmic portion of the chain corresponds to 214-234; it reads LHAQCRGFFSSLVVLNPLKPL. Residues 235 to 255 traverse the membrane as a helical segment; sequence FKLMASLCLSVLTVSLPFALF. Residues 256–327 are Lumenal-facing; that stretch reads QYYAYTQFCL…RYYELRQVPN (72 aa). Residues 328 to 348 form a helical membrane-spanning segment; the sequence is FLLATPVAVLVVWAAWTYVTT. The Cytoplasmic portion of the chain corresponds to 349 to 379; that stretch reads HPWLCLTLGLRRSKDSKKTLEKPHPGFLSPK. The chain crosses the membrane as a helical span at residues 380 to 400; it reads VFVYLVHAAGLLLFGSLCMHV. Topologically, residues 401–470 are lumenal; sequence QVLTRLLCSS…NWRACSPVTR (70 aa). Residues 471–491 traverse the membrane as a helical segment; the sequence is CILGYFLTYWLLGLLLHCNFL. At 492 to 494 the chain is on the cytoplasmic side; sequence PWT.

Belongs to the PIGV family. In terms of processing, not N-glycosylated.

The protein localises to the endoplasmic reticulum membrane. It functions in the pathway glycolipid biosynthesis; glycosylphosphatidylinositol-anchor biosynthesis. Functionally, alpha-1,6-mannosyltransferase that catalyzes the transfer of the second mannose, via an alpha-1,6 bond, from a dolichol-phosphate-mannose (Dol-P-Man) to the alpha-D-Man-(1-&gt;4)-alpha-D-GlcN-(1-&gt;6)-(1-radyl,2-acyl-sn-glycero-3-phospho)-2-acyl-inositol intermediate to generate an alpha-D-Man-(1-&gt;6)-alpha-D-Man-(1-&gt;4)-alpha-D-GlcN-(1-&gt;6)-(1-radyl,2-acyl-sn-glycero-3-phospho)-2-acyl-inositol and participates in the seventh step of the glycosylphosphatidylinositol-anchor biosynthesis. Also transfers the second mannose on a 2-PEtn-alpha-D-Man-(1-&gt;4)-alpha-D-GlcN-(1-&gt;6)-(1-radyl,2-acyl-sn-glycero-3-phospho)-2-acyl-inositol. The polypeptide is GPI alpha-1,6-mannosyltransferase 2 (Cricetulus griseus (Chinese hamster)).